Reading from the N-terminus, the 163-residue chain is Transcription elongation factor GreA (163 aa).

The stretch at 49–80 (ENAEYDAARDRQSEVERRILELERILENAEII) forms a coiled coil.

This sequence belongs to the GreA/GreB family.

Necessary for efficient RNA polymerase transcription elongation past template-encoded arresting sites. The arresting sites in DNA have the property of trapping a certain fraction of elongating RNA polymerases that pass through, resulting in locked ternary complexes. Cleavage of the nascent transcript by cleavage factors such as GreA or GreB allows the resumption of elongation from the new 3'terminus. GreA releases sequences of 2 to 3 nucleotides. This chain is Transcription elongation factor GreA, found in Mycoplasmopsis agalactiae (strain NCTC 10123 / CIP 59.7 / PG2) (Mycoplasma agalactiae).